We begin with the raw amino-acid sequence, 687 residues long: Polyphosphate kinase (687 aa).

Asparagine 45 contacts ATP. Arginine 375 and arginine 405 together coordinate Mg(2+). The Phosphohistidine intermediate role is filled by histidine 435. Tyrosine 472, arginine 568, and histidine 596 together coordinate ATP.

It belongs to the polyphosphate kinase 1 (PPK1) family. Mg(2+) is required as a cofactor. An intermediate of this reaction is the autophosphorylated ppk in which a phosphate is covalently linked to a histidine residue through a N-P bond.

The catalysed reaction is [phosphate](n) + ATP = [phosphate](n+1) + ADP. Its function is as follows. Catalyzes the reversible transfer of the terminal phosphate of ATP to form a long-chain polyphosphate (polyP). The polypeptide is Polyphosphate kinase (Paraburkholderia phytofirmans (strain DSM 17436 / LMG 22146 / PsJN) (Burkholderia phytofirmans)).